A 433-amino-acid polypeptide reads, in one-letter code: Deoxyguanosinetriphosphate triphosphohydrolase-like protein 2 (433 aa).

The HD domain occupies 61 to 248; the sequence is RLTHSLEVAQ…METADDIAYT (188 aa).

Belongs to the dGTPase family. Type 2 subfamily.

The sequence is that of Deoxyguanosinetriphosphate triphosphohydrolase-like protein 2 from Deinococcus radiodurans (strain ATCC 13939 / DSM 20539 / JCM 16871 / CCUG 27074 / LMG 4051 / NBRC 15346 / NCIMB 9279 / VKM B-1422 / R1).